Here is a 288-residue protein sequence, read N- to C-terminus: DNA repair protein RecO (288 aa).

Belongs to the RecO family.

Functionally, involved in DNA repair and RecF pathway recombination. The sequence is that of DNA repair protein RecO from Trichodesmium erythraeum (strain IMS101).